The following is a 652-amino-acid chain: uncharacterized protein (652 aa).

A compositionally biased stretch (basic and acidic residues) spans 1–13 (MSVTESKAKTERK). A disordered region spans residues 1–21 (MSVTESKAKTERKSSRKPAKT).

This sequence belongs to the ParB family.

This is an uncharacterized protein from Escherichia coli (strain K12).